Here is a 588-residue protein sequence, read N- to C-terminus: Serine/threonine-protein phosphatase 2A 65 kDa regulatory subunit A alpha isoform (588 aa).

14 HEAT repeats span residues 2 to 42, 44 to 80, 81 to 119, 158 to 196, 197 to 235, 236 to 274, 275 to 313, 315 to 352, 353 to 391, 393 to 430, 432 to 469, 470 to 508, 509 to 547, and 549 to 586; these read AMVD…ALGE, RTRK…FVGG, IEFA…QMKE, DVLK…TVES, TFLI…LLEP, QDCV…AVGP, DCTR…LLNP, LAIQ…ILGK, DSTI…VIGI, LLSQ…QLGI, FFDD…EFGP, EWAM…VMGS, EITC…IVDQ, and VVDK…STAA.

The protein belongs to the phosphatase 2A regulatory subunit A family. As to quaternary structure, PP2A consists of a common heterodimeric core enzyme, composed of a 36 kDa catalytic subunit (subunit C) and a 65 kDa constant regulatory subunit (subunit A), that associates with a variety of regulatory subunits such as subunits B (the R2/B/PR55/B55, R3/B''/PR72/PR130/PR59 and R5/B'/B56 families) and the regulatory subunits TON2. Interacts with CYP20-1/ROC7. Also interacts with phosphatidic acid (PA), a lipid signaling molecule. Interacts with CHIP. Interacts with SIC/RON3. Post-translationally, ubiquitinated. CHIP-mediated ubiquitination enhances phosphatase activity after an abiotic stress such as low temperature or darkness. Mostly expressed in cell-dividing tissues such as apical meristems. Ubiquitous, with higher levels in roots and flowers (at protein level).

It is found in the cytoplasm. It localises to the cytosol. The protein resides in the nucleus. The A subunit of protein phosphatase 2A serves as a scaffolding molecule to coordinate the assembly of the catalytic subunit and a variable regulatory B subunit. Seems to act as a positive regulator of PP2A catalytic activity. Confers resistance to phosphatase inhibitors such as okadaic acid and cantharidin. Involved during developmental process such as seedling and floral developments, root gravitropism, and stomatal opening regulation. Involved in the regulation of auxin efflux, especially during basipetal (tips to base) auxin transport in roots, and appears to contribute to the perception of auxin efflux inhibitors such as 1-N-naphthylphthalamic acid (NPA) and to semicarbazone I (substituted phenylsemicarbazone of 2-acetylarylcarboxylic acids) (SCB-I). Modulates the magnitude of ethylene response in the hypocotyl and stem, and functions as a general positive transducer of early ABA signaling. The holoenzyme composed of PP2AA1, PP2A4 and B'ZETA or B'ETA acts as a negative regulator of plant innate immunity by controlling BAK1 phosphorylation state and activation in surface-localized immune receptor complexes. The polypeptide is Serine/threonine-protein phosphatase 2A 65 kDa regulatory subunit A alpha isoform (PP2AA1) (Arabidopsis thaliana (Mouse-ear cress)).